The primary structure comprises 566 residues: Lactase-like protein (566 aa).

An N-terminal signal peptide occupies residues 1–20 (MKPVWVIILGWILLVPRVGT). Residues 21–540 (AWRGPPEEAS…LLRHMHVASE (520 aa)) lie on the Extracellular side of the membrane. N-linked (GlcNAc...) asparagine glycosylation is found at asparagine 170 and asparagine 244. The helical transmembrane segment at 541–561 (IVVPTVCALSILTAALMLTLL) threads the bilayer. Residues 562–566 (LRRRG) lie on the Cytoplasmic side of the membrane.

Belongs to the glycosyl hydrolase 1 family. Klotho subfamily. As to quaternary structure, may form dimers. Strongly expressed in the lens of the eye, where it localizes to the equatorial epithelium and outer layers of newly extending fiber cells (at protein level). May also be expressed in kidney and skin. However, another study suggests that expression is specific to eye and is minimal in other tissues.

Its subcellular location is the endoplasmic reticulum membrane. Plays a role in formation of the lens suture in the eye, which is important for normal optical properties of the lens. This is Lactase-like protein (Lctl) from Mus musculus (Mouse).